The following is a 168-amino-acid chain: Protein SprT (168 aa).

The SprT-like domain maps to 20–166 (EKLQQANKYL…RHCQAILQLI (147 aa)). H78 provides a ligand contact to Zn(2+). Residue E79 is part of the active site. Residue H82 coordinates Zn(2+).

The protein belongs to the SprT family. It depends on Zn(2+) as a cofactor.

Its subcellular location is the cytoplasm. This Proteus mirabilis (strain HI4320) protein is Protein SprT.